The following is a 484-amino-acid chain: tRNA sulfurtransferase (484 aa).

The THUMP domain maps to 63-167 (QGIRERLSCM…DQRLFVVHDQ (105 aa)). Residues 185–186 (LM), Lys267, Gly289, and Gln298 contribute to the ATP site. Cys346 and Cys457 are disulfide-bonded. One can recognise a Rhodanese domain in the interval 405–483 (ALAGQVILDI…GHANVRVYRP (79 aa)). Cys457 acts as the Cysteine persulfide intermediate in catalysis.

The protein belongs to the ThiI family.

The protein resides in the cytoplasm. It catalyses the reaction [ThiI sulfur-carrier protein]-S-sulfanyl-L-cysteine + a uridine in tRNA + 2 reduced [2Fe-2S]-[ferredoxin] + ATP + H(+) = [ThiI sulfur-carrier protein]-L-cysteine + a 4-thiouridine in tRNA + 2 oxidized [2Fe-2S]-[ferredoxin] + AMP + diphosphate. The catalysed reaction is [ThiS sulfur-carrier protein]-C-terminal Gly-Gly-AMP + S-sulfanyl-L-cysteinyl-[cysteine desulfurase] + AH2 = [ThiS sulfur-carrier protein]-C-terminal-Gly-aminoethanethioate + L-cysteinyl-[cysteine desulfurase] + A + AMP + 2 H(+). Its pathway is cofactor biosynthesis; thiamine diphosphate biosynthesis. Functionally, catalyzes the ATP-dependent transfer of a sulfur to tRNA to produce 4-thiouridine in position 8 of tRNAs, which functions as a near-UV photosensor. Also catalyzes the transfer of sulfur to the sulfur carrier protein ThiS, forming ThiS-thiocarboxylate. This is a step in the synthesis of thiazole, in the thiamine biosynthesis pathway. The sulfur is donated as persulfide by IscS. The chain is tRNA sulfurtransferase from Pseudomonas syringae pv. syringae (strain B728a).